Here is a 224-residue protein sequence, read N- to C-terminus: Ribose-5-phosphate isomerase A (224 aa).

Substrate contacts are provided by residues 32–35 (TGST), 85–88 (DGAD), and 98–101 (KGGG). Glu107 functions as the Proton acceptor in the catalytic mechanism. Lys125 is a substrate binding site.

Belongs to the ribose 5-phosphate isomerase family. As to quaternary structure, homodimer.

It carries out the reaction aldehydo-D-ribose 5-phosphate = D-ribulose 5-phosphate. Its pathway is carbohydrate degradation; pentose phosphate pathway; D-ribose 5-phosphate from D-ribulose 5-phosphate (non-oxidative stage): step 1/1. Catalyzes the reversible conversion of ribose-5-phosphate to ribulose 5-phosphate. The protein is Ribose-5-phosphate isomerase A of Pseudomonas putida (strain GB-1).